We begin with the raw amino-acid sequence, 222 residues long: Large ribosomal subunit protein uL4 (222 aa).

Residues 42-100 (AAGRQGTHSTKTRGEVRGGGKKPYRQKGTGRARQGSVRAPQFTGGGTVHGPKPRDYAQR) form a disordered region. The segment covering 60-71 (GGKKPYRQKGTG) has biased composition (basic residues).

Belongs to the universal ribosomal protein uL4 family. As to quaternary structure, part of the 50S ribosomal subunit.

One of the primary rRNA binding proteins, this protein initially binds near the 5'-end of the 23S rRNA. It is important during the early stages of 50S assembly. It makes multiple contacts with different domains of the 23S rRNA in the assembled 50S subunit and ribosome. In terms of biological role, forms part of the polypeptide exit tunnel. This is Large ribosomal subunit protein uL4 from Thermobifida fusca (strain YX).